Here is a 381-residue protein sequence, read N- to C-terminus: tRNA pseudouridine synthase D (381 aa).

The active-site Nucleophile is Asp81. In terms of domain architecture, TRUD spans 160-335 (GMPNYFGSQR…TLGSRRFFWV (176 aa)).

The protein belongs to the pseudouridine synthase TruD family.

It catalyses the reaction uridine(13) in tRNA = pseudouridine(13) in tRNA. Responsible for synthesis of pseudouridine from uracil-13 in transfer RNAs. This is tRNA pseudouridine synthase D from Helicobacter pylori (strain HPAG1).